The chain runs to 23 residues: Septenin 2 (23 aa).

As to expression, expressed in skin glands.

It localises to the secreted. In terms of biological role, may act as an antimicrobial peptide. The sequence is that of Septenin 2 from Osteopilus septentrionalis (Cuban treefrog).